A 91-amino-acid chain; its full sequence is Small ribosomal subunit protein uS19 (91 aa).

This sequence belongs to the universal ribosomal protein uS19 family.

Protein S19 forms a complex with S13 that binds strongly to the 16S ribosomal RNA. This is Small ribosomal subunit protein uS19 from Ectopseudomonas mendocina (strain ymp) (Pseudomonas mendocina).